A 132-amino-acid chain; its full sequence is Ribonuclease P protein component (132 aa).

This sequence belongs to the RnpA family. In terms of assembly, consists of a catalytic RNA component (M1 or rnpB) and a protein subunit.

The catalysed reaction is Endonucleolytic cleavage of RNA, removing 5'-extranucleotides from tRNA precursor.. Its function is as follows. RNaseP catalyzes the removal of the 5'-leader sequence from pre-tRNA to produce the mature 5'-terminus. It can also cleave other RNA substrates such as 4.5S RNA. The protein component plays an auxiliary but essential role in vivo by binding to the 5'-leader sequence and broadening the substrate specificity of the ribozyme. The polypeptide is Ribonuclease P protein component (Micrococcus luteus (strain ATCC 4698 / DSM 20030 / JCM 1464 / CCM 169 / CCUG 5858 / IAM 1056 / NBRC 3333 / NCIMB 9278 / NCTC 2665 / VKM Ac-2230) (Micrococcus lysodeikticus)).